The following is a 127-amino-acid chain: Aspartate 1-decarboxylase (127 aa).

Ser-25 functions as the Schiff-base intermediate with substrate; via pyruvic acid in the catalytic mechanism. Ser-25 is subject to Pyruvic acid (Ser). Position 57 (Thr-57) interacts with substrate. The active-site Proton donor is Tyr-58. A substrate-binding site is contributed by 73-75; sequence GAA.

This sequence belongs to the PanD family. In terms of assembly, heterooctamer of four alpha and four beta subunits. Requires pyruvate as cofactor. In terms of processing, is synthesized initially as an inactive proenzyme, which is activated by self-cleavage at a specific serine bond to produce a beta-subunit with a hydroxyl group at its C-terminus and an alpha-subunit with a pyruvoyl group at its N-terminus.

Its subcellular location is the cytoplasm. It catalyses the reaction L-aspartate + H(+) = beta-alanine + CO2. The protein operates within cofactor biosynthesis; (R)-pantothenate biosynthesis; beta-alanine from L-aspartate: step 1/1. Its function is as follows. Catalyzes the pyruvoyl-dependent decarboxylation of aspartate to produce beta-alanine. This is Aspartate 1-decarboxylase from Geobacillus sp. (strain WCH70).